We begin with the raw amino-acid sequence, 332 residues long: tRNA-dihydrouridine(20/20a) synthase (332 aa).

FMN contacts are provided by residues 19-21 and Q71; that span reads PML. The active-site Proton donor is C101. FMN is bound by residues K140, H173, 213–215, and 235–236; these read NGG and GR.

Belongs to the Dus family. DusA subfamily. Requires FMN as cofactor.

It carries out the reaction 5,6-dihydrouridine(20) in tRNA + NADP(+) = uridine(20) in tRNA + NADPH + H(+). It catalyses the reaction 5,6-dihydrouridine(20) in tRNA + NAD(+) = uridine(20) in tRNA + NADH + H(+). The catalysed reaction is 5,6-dihydrouridine(20a) in tRNA + NADP(+) = uridine(20a) in tRNA + NADPH + H(+). The enzyme catalyses 5,6-dihydrouridine(20a) in tRNA + NAD(+) = uridine(20a) in tRNA + NADH + H(+). Its function is as follows. Catalyzes the synthesis of 5,6-dihydrouridine (D), a modified base found in the D-loop of most tRNAs, via the reduction of the C5-C6 double bond in target uridines. Specifically modifies U20 and U20a in tRNAs. This Salmonella typhi protein is tRNA-dihydrouridine(20/20a) synthase.